A 281-amino-acid chain; its full sequence is CDAN1-interacting nuclease 1 (281 aa).

Thr114 is modified (phosphothreonine).

It is found in the nucleus. Its subcellular location is the cytoplasm. Its function is as follows. Plays a role in erythroid cell differentiation. The protein is CDAN1-interacting nuclease 1 of Homo sapiens (Human).